A 281-amino-acid chain; its full sequence is 3-mercaptopyruvate sulfurtransferase (281 aa).

Rhodanese domains follow at residues 17-135 and 165-278; these read DDPE…LLEE and HENT…LPVE. Arg-179 serves as a coordination point for substrate. Catalysis depends on Cys-238, which acts as the Cysteine persulfide intermediate. A substrate specificity region spans residues 238–244; the sequence is CGSGVTA.

As to quaternary structure, monomer.

It localises to the cytoplasm. It carries out the reaction 2-oxo-3-sulfanylpropanoate + [thioredoxin]-dithiol = [thioredoxin]-disulfide + hydrogen sulfide + pyruvate + H(+). In terms of biological role, catalyzes the transfer of sulfur from 3-mercaptopyruvate to a thiol-containing acceptor to form an intramolecular disulfide releasing hydrogen sulfide and pyruvate. May be involved in the enhancement of bacterial growth inhibition by serine. The polypeptide is 3-mercaptopyruvate sulfurtransferase (sseA) (Escherichia coli (strain K12)).